The chain runs to 241 residues: MADYEKQKMNAAIKAAEYVRSGMIVGLGTGTTSYYLINEIGRRVREEGLKIRAVCTSRRTEDLAKQNGIEVIQGTKDQIDLTIDGADQVGMYGTLIKGGGGALLREKIVAYNSKEMYVIVDSRKIEAAHFGSFPLPVEIVPFMHMRTLENLRGICTQTDLRMNEKGEPFVTDNGNYIADMHMGMIDDPINLERSLKSIPGVVEVGLFNGIAKRIFEGTDEGCNIYSITNSGIKKEEVYFDP.

Substrate is bound by residues 29–32 (TGTT), 84–87 (DGAD), and 97–100 (KGGG). The active-site Proton acceptor is glutamate 106. Lysine 124 provides a ligand contact to substrate.

This sequence belongs to the ribose 5-phosphate isomerase family. As to quaternary structure, homodimer.

The catalysed reaction is aldehydo-D-ribose 5-phosphate = D-ribulose 5-phosphate. The protein operates within carbohydrate degradation; pentose phosphate pathway; D-ribose 5-phosphate from D-ribulose 5-phosphate (non-oxidative stage): step 1/1. In terms of biological role, catalyzes the reversible conversion of ribose-5-phosphate to ribulose 5-phosphate. This is Ribose-5-phosphate isomerase A from Thermoplasma acidophilum (strain ATCC 25905 / DSM 1728 / JCM 9062 / NBRC 15155 / AMRC-C165).